The primary structure comprises 162 residues: Succinate dehydrogenase assembly factor 2-A, mitochondrial (162 aa).

A mitochondrion-targeting transit peptide spans 1-23 (MLRQLRLTMDISGWIFLPWRRSM).

This sequence belongs to the SDHAF2 family. In terms of assembly, interacts with the flavoprotein subunit within the SDH catalytic dimer.

Its subcellular location is the mitochondrion matrix. Its function is as follows. Plays an essential role in the assembly of succinate dehydrogenase (SDH), an enzyme complex (also referred to as respiratory complex II) that is a component of both the tricarboxylic acid (TCA) cycle and the mitochondrial electron transport chain, and which couples the oxidation of succinate to fumarate with the reduction of ubiquinone (coenzyme Q) to ubiquinol. Required for flavinylation (covalent attachment of FAD) of the flavoprotein subunit of the SDH catalytic dimer. This is Succinate dehydrogenase assembly factor 2-A, mitochondrial from Drosophila erecta (Fruit fly).